The chain runs to 35 residues: U5-ctenitoxin-Co1a (35 aa).

4 disulfide bridges follow: cysteine 4–cysteine 18, cysteine 11–cysteine 24, cysteine 17–cysteine 32, and cysteine 26–cysteine 30.

In terms of tissue distribution, expressed by the venom gland.

The protein localises to the secreted. In terms of biological role, blocks voltage-gated sodium channels (Nav). This Ctenus ornatus (Brazilian spider) protein is U5-ctenitoxin-Co1a.